We begin with the raw amino-acid sequence, 339 residues long: D-erythrose-4-phosphate dehydrogenase (339 aa).

NAD(+) is bound at residue 12-13 (RI). Residues 154 to 156 (SCT), Arg-200, 213 to 214 (TK), and Arg-236 contribute to the substrate site. Cys-155 functions as the Nucleophile in the catalytic mechanism. Asn-318 is an NAD(+) binding site.

Belongs to the glyceraldehyde-3-phosphate dehydrogenase family. Epd subfamily. In terms of assembly, homotetramer.

It is found in the cytoplasm. It carries out the reaction D-erythrose 4-phosphate + NAD(+) + H2O = 4-phospho-D-erythronate + NADH + 2 H(+). Its pathway is cofactor biosynthesis; pyridoxine 5'-phosphate biosynthesis; pyridoxine 5'-phosphate from D-erythrose 4-phosphate: step 1/5. In terms of biological role, catalyzes the NAD-dependent conversion of D-erythrose 4-phosphate to 4-phosphoerythronate. The chain is D-erythrose-4-phosphate dehydrogenase from Proteus mirabilis (strain HI4320).